Consider the following 114-residue polypeptide: LQDIINEFGGAMPQTFGVPVEEIVRGIKMGVRKVNIDTDCRMRMTGQFRRIAEQNKAEFDPRKFLKPAMDAMRDLCKARLEAFGTAGHASKIKVIPMDDMAKRYASGSLAPKTN.

Residue 35–38 (NIDT) coordinates dihydroxyacetone phosphate.

It belongs to the class II fructose-bisphosphate aldolase family. In terms of assembly, homodimer. Requires Zn(2+) as cofactor.

The catalysed reaction is beta-D-fructose 1,6-bisphosphate = D-glyceraldehyde 3-phosphate + dihydroxyacetone phosphate. It participates in carbohydrate biosynthesis; Calvin cycle. The protein operates within carbohydrate degradation; glycolysis; D-glyceraldehyde 3-phosphate and glycerone phosphate from D-glucose: step 4/4. Catalyzes the aldol condensation of dihydroxyacetone phosphate (DHAP or glycerone-phosphate) with glyceraldehyde 3-phosphate (G3P) to form fructose 1,6-bisphosphate (FBP) in gluconeogenesis and the reverse reaction in glycolysis. The chain is Fructose-bisphosphate aldolase 2 (cbbA) from Rhodobacter capsulatus (Rhodopseudomonas capsulata).